A 422-amino-acid polypeptide reads, in one-letter code: D-amino acid dehydrogenase (422 aa).

Residue 3-17 (VVVIGAGVVGTASAW) coordinates FAD.

It belongs to the DadA oxidoreductase family. The cofactor is FAD.

It carries out the reaction a D-alpha-amino acid + A + H2O = a 2-oxocarboxylate + AH2 + NH4(+). The protein operates within amino-acid degradation; D-alanine degradation; NH(3) and pyruvate from D-alanine: step 1/1. Oxidative deamination of D-amino acids. The protein is D-amino acid dehydrogenase of Paramagnetospirillum magneticum (strain ATCC 700264 / AMB-1) (Magnetospirillum magneticum).